A 1673-amino-acid chain; its full sequence is AF4/FMR2 family member lilli (1673 aa).

Disordered regions lie at residues 1-24, 54-80, 125-302, 407-534, 575-604, 722-1086, 1114-1133, 1141-1160, and 1187-1315; these read MAQQQQQQMQQQQQHHTSSINNNN, YSQNYNMEEYERRKRREREKIERQQGI, SRSA…PPEK, QLPP…GAQN, VGTGSGSGGTLSSGGSSSNKTPSPTESNKW, RLSD…INTL, QGKLDAAAQPSAPQAPPAAP, RMTPTQQQQLGAGLASPART, and KLTP…MGKE. The span at 71-80 shows a compositional bias: basic and acidic residues; the sequence is REKIERQQGI. Low complexity-rich tracts occupy residues 146–180 and 223–244; these read SLGHSPSSASSAAGPTAASATTSLPGQQQHYQQQQ and PRTSSSNSNSSSVTNNASSGGV. Phosphothreonine is present on T420. The segment covering 428 to 441 has biased composition (basic and acidic residues); it reads LKTEKNHSLEKQDS. The segment covering 443–454 has biased composition (acidic residues); that stretch reads LENDLELSESED. A phosphoserine mark is found at S450 and S452. The segment covering 465–486 has biased composition (low complexity); that stretch reads GNSSNSSESDSSESGSESSSKN. Basic residues predominate over residues 491–500; the sequence is HPNHQQHHHQ. Over residues 501–525 the composition is skewed to low complexity; it reads LQQQQQQQQATMQQQQVLQQQHRSQ. Over residues 577 to 586 the composition is skewed to gly residues; the sequence is TGSGSGGTLS. Positions 594 to 604 are enriched in polar residues; sequence KTPSPTESNKW. The span at 724 to 757 shows a compositional bias: low complexity; that stretch reads SDSGTSASGSSSSSSSSSDSAMGGEVVPMPGPGE. Over residues 775 to 788 the composition is skewed to polar residues; it reads QPTQSQKAPPSNSV. Residues 802 to 812 are compositionally biased toward basic residues; the sequence is QRQKKPRKKKA. Phosphoserine occurs at positions 821 and 822. Residues 851–863 constitute a DNA-binding region (a.T hook); it reads KKGRGRPRKQQQS. Over residues 860–898 the composition is skewed to low complexity; it reads QQQSGGSGNLSSASAGSSSQTKGPTLTAAKKPLAKTPLA. Phosphoserine is present on residues S871 and S873. Residues 909-919 show a composition bias toward polar residues; the sequence is SQSSSNGNTPT. Composition is skewed to low complexity over residues 949 to 965 and 993 to 1004; these read SSSAESSSKSSSSSSSS and GSGSSSPSSSGS. Over residues 1011-1022 the composition is skewed to polar residues; that stretch reads TRSQVGSGQALA. The span at 1034–1060 shows a compositional bias: low complexity; the sequence is SQHSQHLSSSDCSSSSGGCTAVCSSSS. Positions 1065-1082 are enriched in basic and acidic residues; sequence EGRREKERERKPKSDKNK. The segment covering 1190–1205 has biased composition (polar residues); that stretch reads PAQQNGHLTPKDQATN. Composition is skewed to basic and acidic residues over residues 1226-1243 and 1252-1282; these read EHPVKPEPELDAGYEAKF and FQLKQERDRDRERERERERERERDREREQPP. S1362 is subject to Phosphoserine. T1364 carries the post-translational modification Phosphothreonine. Positions 1564–1583 are enriched in low complexity; that stretch reads NTPSSISPSNSVGSQGSGSN. The tract at residues 1564–1588 is disordered; the sequence is NTPSSISPSNSVGSQGSGSNTPPGR.

It belongs to the AF4 family. Component of the super elongation complex (SEC), at least composed of Ell, Cdk9, cyclin-T (CycT), lilli and ear.

The protein localises to the nucleus. Its function is as follows. Has a role in transcriptional regulation. Acts in parallel with the Ras/MAPK and the PI3K/PKB pathways in the control of cell identity and cellular growth. Essential for regulation of the cytoskeleton and cell growth but not for cell proliferation or growth rate. Required specifically for the microtubule-based basal transport of lipid droplets. Plays a partially redundant function downstream of Raf in cell fate specification in the developing eye. Pair-rule protein that regulates embryonic cellularization, gastrulation and segmentation. In Drosophila melanogaster (Fruit fly), this protein is AF4/FMR2 family member lilli.